The chain runs to 393 residues: Lysophosphatidic acid receptor 1 (393 aa).

Residues methionine 1–lysine 50 lie on the Extracellular side of the membrane. Disulfide bonds link cysteine 24-cysteine 190 and cysteine 188-cysteine 195. N-linked (GlcNAc...) asparagine glycans are attached at residues asparagine 27 and asparagine 35. An a 1-acyl-sn-glycero-3-phosphate-binding site is contributed by lysine 39. Residues leucine 51–tyrosine 75 traverse the membrane as a helical segment. The Cytoplasmic portion of the chain corresponds to valine 76–proline 83. A helical membrane pass occupies residues isoleucine 84 to phenylalanine 107. The Extracellular portion of the chain corresponds to asparagine 108–tryptophan 121. The helical transmembrane segment at leucine 122–isoleucine 144 threads the bilayer. An a 1-acyl-sn-glycero-3-phosphate-binding site is contributed by arginine 124–aspartate 129. The Cytoplasmic portion of the chain corresponds to glutamate 145–arginine 163. The chain crosses the membrane as a helical span at residues valine 164–valine 184. The Extracellular segment spans residues glycine 185–aspartate 204. Residues serine 205–tyrosine 225 traverse the membrane as a helical segment. Tryptophan 210 is a binding site for a 1-acyl-sn-glycero-3-phosphate. Residues alanine 226–serine 255 are Cytoplasmic-facing. Residues leucine 256 to leucine 280 form a helical membrane-spanning segment. The Extracellular segment spans residues aspartate 281–lysine 294. Cysteine 284 and cysteine 287 form a disulfide bridge. Residues phenylalanine 295–aspartate 315 traverse the membrane as a helical segment. Over lysine 316–valine 393 the chain is Cytoplasmic. The residue at position 341 (serine 341) is a Phosphoserine. Threonine 351 is subject to Phosphothreonine. The segment covering lysine 369–glutamine 381 has biased composition (basic and acidic residues). Residues lysine 369–valine 393 are disordered.

The protein belongs to the G-protein coupled receptor 1 family. In terms of assembly, interacts with RALA and GRK2. Interacts with GNAQ and GNA13. Interacts with CD14; the interaction is enhanced by exposure to bacterial lipopolysaccharide (LPS). Post-translationally, N-glycosylated. As to expression, detected in brain cortex and in pituitary pars tuberalis.

It localises to the cell surface. Its subcellular location is the cell membrane. It is found in the endosome. Receptor for lysophosphatidic acid (LPA). Plays a role in the reorganization of the actin cytoskeleton, cell migration, differentiation and proliferation, and thereby contributes to the responses to tissue damage and infectious agents. Activates downstream signaling cascades via the G(i)/G(o), G(12)/G(13), and G(q) families of heteromeric G proteins. Signaling inhibits adenylyl cyclase activity and decreases cellular cAMP levels. Signaling triggers an increase of cytoplasmic Ca(2+) levels. Activates RALA; this leads to the activation of phospholipase C (PLC) and the formation of inositol 1,4,5-trisphosphate. Signaling mediates activation of down-stream MAP kinases. Contributes to the regulation of cell shape. Promotes Rho-dependent reorganization of the actin cytoskeleton in neuronal cells and neurite retraction. Promotes the activation of Rho and the formation of actin stress fibers. Promotes formation of lamellipodia at the leading edge of migrating cells via activation of RAC1. Through its function as LPA receptor, plays a role in chemotaxis and cell migration, including responses to injury and wounding. Plays a role in triggering inflammation in response to bacterial lipopolysaccharide (LPS) via its interaction with CD14. Promotes cell proliferation in response to LPA. Inhibits the intracellular ciliogenesis pathway in response to LPA and through AKT1 activation. Required for normal skeleton development. May play a role in osteoblast differentiation. Required for normal brain development. Required for normal proliferation, survival and maturation of newly formed neurons in the adult dentate gyrus. Plays a role in pain perception and in the initiation of neuropathic pain. The sequence is that of Lysophosphatidic acid receptor 1 (LPAR1) from Ovis aries (Sheep).